Here is a 152-residue protein sequence, read N- to C-terminus: Transcriptional repressor NrdR (152 aa).

Over residues 1–10 the composition is skewed to polar residues; that stretch reads MKCPSCQHNG. A disordered region spans residues 1-21; it reads MKCPSCQHNGSRVLDSRPADE. A zinc finger spans residues 3–34; the sequence is CPSCQHNGSRVLDSRPADEGKSIRRRRECEAC. Residues 49 to 139 form the ATP-cone domain; that stretch reads LIVVKKEGVR…VYRQFKDINV (91 aa).

This sequence belongs to the NrdR family. It depends on Zn(2+) as a cofactor.

Functionally, negatively regulates transcription of bacterial ribonucleotide reductase nrd genes and operons by binding to NrdR-boxes. This is Transcriptional repressor NrdR from Bacillus velezensis (strain DSM 23117 / BGSC 10A6 / LMG 26770 / FZB42) (Bacillus amyloliquefaciens subsp. plantarum).